The chain runs to 722 residues: Metal transporter cnnm-5 (722 aa).

A signal peptide spans 1-17 (MSLFLFAIFQLALGSPG). Over 18–139 (APNGPNVPLQ…AAAAKYMGDE (122 aa)) the chain is Extracellular. 2 N-linked (GlcNAc...) asparagine glycosylation sites follow: Asn102 and Asn114. A CNNM transmembrane domain is found at 132–318 (AAKYMGDEIV…AQNEREKTIL (187 aa)). Residues 140–160 (IVFCFFCILMSAYASGMTLGY) form a helical membrane-spanning segment. The Cytoplasmic segment spans residues 161-196 (MKFSMIDLNTMLKIAEGDAAKKRVRRIMHFRRRSTQ). Residues 197–217 (LVVTFSLFSSVFTVLFTTTCE) traverse the membrane as a helical segment. Topologically, residues 218 to 227 (KMLHGVSNED) are extracellular. Residues 228-248 (VLKMAVPALICLIFAEMIPQA) form a helical membrane-spanning segment. Residues 249–257 (VCNSKFGFN) lie on the Cytoplasmic side of the membrane. A helical transmembrane segment spans residues 258 to 278 (LAASLWFVTVIIFFVTLPIAY). The Extracellular segment spans residues 279-722 (PASLVLGRFL…ETTPFMEKQE (444 aa)). N-linked (GlcNAc...) asparagine glycans are attached at residues Asn320, Asn349, and Asn371. 2 consecutive CBS domains span residues 333–396 (MVPI…LIDE) and 413–473 (TVKF…KIDE). The interval 584 to 607 (SQRSSSTVNSQQHRQQTTDNSRST) is disordered. Asn639 is a glycosylation site (N-linked (GlcNAc...) asparagine). The tract at residues 686–722 (LNSRASTSTSTTPACRTPLSVDARSQDETTPFMEKQE) is disordered. Positions 688 to 703 (SRASTSTSTTPACRTP) are enriched in low complexity.

This sequence belongs to the ACDP family.

The protein resides in the cell membrane. Probable metal transporter. Probably acts redundantly with the other metal transport proteins cnnm-1, cnnm-2, cnnm-3 and cnnm-4 to regulate Mg(2+) homeostasis. In Caenorhabditis elegans, this protein is Metal transporter cnnm-5.